Reading from the N-terminus, the 302-residue chain is Phospho-N-acetylmuramoyl-pentapeptide-transferase (302 aa).

Transmembrane regions (helical) follow at residues Met-1–Arg-21, Gly-42–Ser-62, Val-68–Val-88, Phe-123–Val-143, Gly-154–Leu-174, Gly-178–Asn-198, Ile-204–Leu-224, Phe-229–Val-249, and Ile-279–Gly-299.

The protein belongs to the glycosyltransferase 4 family. MraY subfamily. The cofactor is Mg(2+).

The protein resides in the cell inner membrane. The catalysed reaction is UDP-N-acetyl-alpha-D-muramoyl-L-alanyl-gamma-D-glutamyl-meso-2,6-diaminopimeloyl-D-alanyl-D-alanine + di-trans,octa-cis-undecaprenyl phosphate = di-trans,octa-cis-undecaprenyl diphospho-N-acetyl-alpha-D-muramoyl-L-alanyl-D-glutamyl-meso-2,6-diaminopimeloyl-D-alanyl-D-alanine + UMP. It participates in cell wall biogenesis; peptidoglycan biosynthesis. In terms of biological role, catalyzes the initial step of the lipid cycle reactions in the biosynthesis of the cell wall peptidoglycan: transfers peptidoglycan precursor phospho-MurNAc-pentapeptide from UDP-MurNAc-pentapeptide onto the lipid carrier undecaprenyl phosphate, yielding undecaprenyl-pyrophosphoryl-MurNAc-pentapeptide, known as lipid I. The chain is Phospho-N-acetylmuramoyl-pentapeptide-transferase from Thermotoga petrophila (strain ATCC BAA-488 / DSM 13995 / JCM 10881 / RKU-1).